Here is a 429-residue protein sequence, read N- to C-terminus: Histidinol dehydrogenase (429 aa).

NAD(+)-binding residues include Tyr-127, Gln-188, and Asn-211. Residues Ser-234, Gln-256, and His-259 each contribute to the substrate site. Residues Gln-256 and His-259 each contribute to the Zn(2+) site. Catalysis depends on proton acceptor residues Glu-324 and His-325. His-325, Asp-358, Glu-412, and His-417 together coordinate substrate. Asp-358 is a binding site for Zn(2+). His-417 lines the Zn(2+) pocket.

The protein belongs to the histidinol dehydrogenase family. Zn(2+) is required as a cofactor.

It carries out the reaction L-histidinol + 2 NAD(+) + H2O = L-histidine + 2 NADH + 3 H(+). It participates in amino-acid biosynthesis; L-histidine biosynthesis; L-histidine from 5-phospho-alpha-D-ribose 1-diphosphate: step 9/9. Functionally, catalyzes the sequential NAD-dependent oxidations of L-histidinol to L-histidinaldehyde and then to L-histidine. In Bacillus cereus (strain ATCC 14579 / DSM 31 / CCUG 7414 / JCM 2152 / NBRC 15305 / NCIMB 9373 / NCTC 2599 / NRRL B-3711), this protein is Histidinol dehydrogenase.